The following is a 266-amino-acid chain: MIYSRSRLPSEGEILIATVKQVFDYGSYVTLDEYGGLQAFLPWSEVSSKWVKNIRDVLKENRKVVVKVIRVDRRKGTVDVSLKKVTDDERRKKNLQWKKIQRLDKILELVSQQLKLSEKDAWEQVAWKLEAKYGDPISAIERAVKEGEKILIDAGVPEIWIKPLLEEAAKHTEEKKVKMSGLITVKTSEPLGVQKIKEVISKALENIEQDYESILNVKIYTIGAPRYRVDVVGTNPKDASEALNQIISNLIKIGKEENVDISVVKK.

The region spanning 12–83 (GEILIATVKQ…RKGTVDVSLK (72 aa)) is the S1 motif domain.

This sequence belongs to the eIF-2-alpha family. In terms of assembly, heterotrimer composed of an alpha, a beta and a gamma chain.

Its function is as follows. eIF-2 functions in the early steps of protein synthesis by forming a ternary complex with GTP and initiator tRNA. In Saccharolobus islandicus (strain M.16.27) (Sulfolobus islandicus), this protein is Translation initiation factor 2 subunit alpha.